Here is a 336-residue protein sequence, read N- to C-terminus: Homeobox-leucine zipper protein HAT14 (336 aa).

Disordered stretches follow at residues 53–141 (RSLS…PDSV) and 160–194 (SNKRDIDDEVERSASRASNEDNDDENGSTRKKLRL). Residues 64–81 (EDEKKKPAPRAKKSDEFR) are compositionally biased toward basic and acidic residues. The segment covering 120 to 129 (VEEEEEEEEA) has biased composition (acidic residues). Residues 130-141 (VPSMSVSPPDSV) are compositionally biased toward low complexity. Residues 160 to 173 (SNKRDIDDEVERSA) are compositionally biased toward basic and acidic residues. The segment at residues 187-246 (STRKKLRLSKDQSAFLEDSFKEHSTLNPKQKIALAKQLNLRPRQVEVWFQNRRARTKLKQ) is a DNA-binding region (homeobox). The interval 254–275 (LKRCCESLTEENRRLQKEVKEL) is leucine-zipper.

This sequence belongs to the HD-ZIP homeobox family. Class II subfamily.

The protein localises to the nucleus. Probable transcription factor. This chain is Homeobox-leucine zipper protein HAT14 (HAT14), found in Arabidopsis thaliana (Mouse-ear cress).